Here is a 229-residue protein sequence, read N- to C-terminus: Aldehyde oxidoreductase iron-sulfur-binding subunit PaoA (229 aa).

The interval 1–21 (MSNQGEYPEDNRVGKHEPHDL) is disordered. The segment at residues 1-53 (MSNQGEYPEDNRVGKHEPHDLSLTRRDLIKVSAATAAAAVVYPHSTLAASVPA) is a signal peptide (tat-type signal). Over residues 9 to 21 (EDNRVGKHEPHDL) the composition is skewed to basic and acidic residues. Residues 61–137 (MPLTLKVNGK…GAEITTIEGL (77 aa)) enclose the 2Fe-2S ferredoxin-type domain. 9 residues coordinate [2Fe-2S] cluster: cysteine 99, cysteine 104, glycine 105, cysteine 107, cysteine 119, cysteine 158, cysteine 161, cysteine 208, and cysteine 210.

Heterotrimer composed of PaoA, PaoB and PaoC. It depends on [2Fe-2S] cluster as a cofactor. Exported by the Tat system. The position of the signal peptide cleavage has not been experimentally proven.

The protein resides in the periplasm. The catalysed reaction is an aldehyde + A + H2O = a carboxylate + AH2 + H(+). Oxidizes aldehydes to the corresponding carboxylic acids with a preference for aromatic aldehydes. It might play a role in the detoxification of aldehydes to avoid cell damage. This Escherichia coli O157:H7 protein is Aldehyde oxidoreductase iron-sulfur-binding subunit PaoA.